Consider the following 348-residue polypeptide: Dihydroorotase (348 aa).

Residues His17 and His19 each contribute to the Zn(2+) site. Substrate contacts are provided by residues 19-21 (HLR) and Asn45. Residues Lys103, His140, and His178 each coordinate Zn(2+). N6-carboxylysine is present on Lys103. Substrate is bound at residue His140. Leu223 serves as a coordination point for substrate. Asp251 provides a ligand contact to Zn(2+). Residue Asp251 is part of the active site. Residues His255 and Ala267 each contribute to the substrate site.

This sequence belongs to the metallo-dependent hydrolases superfamily. DHOase family. Class II DHOase subfamily. Homodimer. Zn(2+) is required as a cofactor.

It carries out the reaction (S)-dihydroorotate + H2O = N-carbamoyl-L-aspartate + H(+). The protein operates within pyrimidine metabolism; UMP biosynthesis via de novo pathway; (S)-dihydroorotate from bicarbonate: step 3/3. Catalyzes the reversible cyclization of carbamoyl aspartate to dihydroorotate. The polypeptide is Dihydroorotase (Edwardsiella ictaluri (strain 93-146)).